The primary structure comprises 86 residues: Defensin-like protein 97 (86 aa).

The first 27 residues, 1 to 27 (MGSLRVSTFAVAVVVCLSILLMSPTDG), serve as a signal peptide directing secretion. Intrachain disulfides connect Cys31–Cys74, Cys38–Cys60, Cys44–Cys71, and Cys48–Cys73.

It belongs to the DEFL family.

Its subcellular location is the secreted. This Arabidopsis thaliana (Mouse-ear cress) protein is Defensin-like protein 97 (LCR85).